Here is a 368-residue protein sequence, read N- to C-terminus: Mitogen-activated protein kinase 7 (368 aa).

The Protein kinase domain maps to 32 to 319 (YVPIKPIGRG…VTDALLHPYM (288 aa)). ATP-binding positions include 38 to 46 (IGRGAYGVV) and Lys-61. Asp-158 acts as the Proton acceptor in catalysis. Thr-191 bears the Phosphothreonine mark. The TXY signature appears at 191–193 (TEY). Tyr-193 is subject to Phosphotyrosine. A Phosphothreonine modification is found at Thr-196.

This sequence belongs to the protein kinase superfamily. CMGC Ser/Thr protein kinase family. MAP kinase subfamily. As to quaternary structure, interacts with MKK3. It depends on Mg(2+) as a cofactor. In terms of processing, dually phosphorylated on Thr-191 and Tyr-193, which activates the enzyme.

The enzyme catalyses L-seryl-[protein] + ATP = O-phospho-L-seryl-[protein] + ADP + H(+). It catalyses the reaction L-threonyl-[protein] + ATP = O-phospho-L-threonyl-[protein] + ADP + H(+). Its activity is regulated as follows. Activated by threonine and tyrosine phosphorylation. Activated in response to hydrogen peroxide. Activation is triggered by MAPKKK17 and MAPKKK18 in a MKK3-dependent manner. MKK3-MPK7 module acts as a positive regulator of PR1 gene expression. The protein is Mitogen-activated protein kinase 7 (MPK7) of Arabidopsis thaliana (Mouse-ear cress).